A 131-amino-acid chain; its full sequence is Large ribosomal subunit protein bL12 (131 aa).

Belongs to the bacterial ribosomal protein bL12 family. In terms of assembly, homodimer. Part of the ribosomal stalk of the 50S ribosomal subunit. Forms a multimeric L10(L12)X complex, where L10 forms an elongated spine to which 2 to 4 L12 dimers bind in a sequential fashion. Binds GTP-bound translation factors.

In terms of biological role, forms part of the ribosomal stalk which helps the ribosome interact with GTP-bound translation factors. Is thus essential for accurate translation. The polypeptide is Large ribosomal subunit protein bL12 (Prochlorococcus marinus (strain NATL1A)).